A 425-amino-acid chain; its full sequence is Putative integrase/recombinase y4rF (425 aa).

Positions 123-210 (DPDALLLASF…HIRTFLRFLC (88 aa)) constitute a Core-binding (CB) domain. Positions 233–418 (HLPPRLAWGD…AASQLAEVAL (186 aa)) constitute a Tyr recombinase domain. Catalysis depends on residues Arg-273, Lys-298, His-370, Arg-373, and His-396. The O-(3'-phospho-DNA)-tyrosine intermediate role is filled by Tyr-405.

This sequence belongs to the 'phage' integrase family.

This chain is Putative integrase/recombinase y4rF, found in Sinorhizobium fredii (strain NBRC 101917 / NGR234).